A 303-amino-acid polypeptide reads, in one-letter code: MNIAMTGGTGFLGQHLTGVLTRQGHHVYILSRNARETEQKNMTYVQWLSEGAAPEQELPHIDVWINLAGKSIFGRWTEKTKQHILSSRINATREVQRLIQKQKEKPKTLIQASAVGIYGTSLEKTFTEDSATSDEDFLSHTAHLWEKEGQHIEAMGIRTVYARFGVMLGEKGALPLMILPYKFLAGGTIGTGRQWLSWIHVEDAAQMIRYAVENAGISGPMNVTAPNPVDMKQFGKTIARVKHRPHWLPVPEFFLSKALGEMSLLIVKGQRALPKKAITSGFRFTYSDLEFALSQLIADRKTV.

Belongs to the NAD(P)-dependent epimerase/dehydratase family. SDR39U1 subfamily.

The protein is Epimerase family protein YfhF (yfhF) of Bacillus subtilis (strain 168).